Here is a 333-residue protein sequence, read N- to C-terminus: NADH-quinone oxidoreductase subunit H (333 aa).

8 helical membrane passes run 17-37 (VIQA…MSFI), 91-111 (VAMA…TLGV), 116-136 (IGLL…LFGG), 156-176 (ISYE…AGSF), 188-208 (MWFI…GVAV), 244-264 (YVNI…GWLA), 272-292 (FIPP…MFVL), and 310-330 (WKVC…VILM).

This sequence belongs to the complex I subunit 1 family. In terms of assembly, NDH-1 is composed of 14 different subunits. Subunits NuoA, H, J, K, L, M, N constitute the membrane sector of the complex.

The protein resides in the cell inner membrane. It carries out the reaction a quinone + NADH + 5 H(+)(in) = a quinol + NAD(+) + 4 H(+)(out). Functionally, NDH-1 shuttles electrons from NADH, via FMN and iron-sulfur (Fe-S) centers, to quinones in the respiratory chain. The immediate electron acceptor for the enzyme in this species is believed to be ubiquinone. Couples the redox reaction to proton translocation (for every two electrons transferred, four hydrogen ions are translocated across the cytoplasmic membrane), and thus conserves the redox energy in a proton gradient. This subunit may bind ubiquinone. This Acinetobacter baylyi (strain ATCC 33305 / BD413 / ADP1) protein is NADH-quinone oxidoreductase subunit H.